Here is a 402-residue protein sequence, read N- to C-terminus: GTPase Obg (402 aa).

One can recognise an Obg domain in the interval 1–159 (MRFIDEAIVT…KELKFELKVV (159 aa)). One can recognise an OBG-type G domain in the interval 160 to 334 (ADVGLIGLPN…VKYHLMNEIE (175 aa)). Residues 166–173 (GLPNAGKS), 191–195 (FTTLV), 213–216 (DIPG), 283–286 (NKID), and 315–317 (STL) contribute to the GTP site. Ser-173 and Thr-193 together coordinate Mg(2+). The segment at 382 to 402 (AAFNNELDDDDDDGVEVVYAP) is disordered. The segment covering 387–396 (ELDDDDDDGV) has biased composition (acidic residues).

The protein belongs to the TRAFAC class OBG-HflX-like GTPase superfamily. OBG GTPase family. In terms of assembly, monomer. It depends on Mg(2+) as a cofactor.

Its subcellular location is the cytoplasm. Functionally, an essential GTPase which binds GTP, GDP and possibly (p)ppGpp with moderate affinity, with high nucleotide exchange rates and a fairly low GTP hydrolysis rate. Plays a role in control of the cell cycle, stress response, ribosome biogenesis and in those bacteria that undergo differentiation, in morphogenesis control. The polypeptide is GTPase Obg (Psychrobacter sp. (strain PRwf-1)).